Consider the following 389-residue polypeptide: 8-amino-7-oxononanoate synthase (389 aa).

Substrate is bound at residue Arg31. 109-110 (GY) is a binding site for pyridoxal 5'-phosphate. His134 is a substrate binding site. Pyridoxal 5'-phosphate-binding positions include Ser180, 205–208 (DEAH), and 236–239 (TLSK). N6-(pyridoxal phosphate)lysine is present on Lys239. Thr349 is a binding site for substrate.

It belongs to the class-II pyridoxal-phosphate-dependent aminotransferase family. BioF subfamily. As to quaternary structure, homodimer. It depends on pyridoxal 5'-phosphate as a cofactor.

The enzyme catalyses 6-carboxyhexanoyl-[ACP] + L-alanine + H(+) = (8S)-8-amino-7-oxononanoate + holo-[ACP] + CO2. The protein operates within cofactor biosynthesis; biotin biosynthesis. Its function is as follows. Catalyzes the decarboxylative condensation of pimeloyl-[acyl-carrier protein] and L-alanine to produce 8-amino-7-oxononanoate (AON), [acyl-carrier protein], and carbon dioxide. The chain is 8-amino-7-oxononanoate synthase from Mycobacterium ulcerans (strain Agy99).